The sequence spans 408 residues: Leucine aminopeptidase 1 (408 aa).

Residues 1 to 16 form the signal peptide; that stretch reads MKVSSAIALLLPVVAA. A propeptide spanning residues 17-89 is cleaved from the precursor; it reads RFVDSAFEQD…SAQSATTGPA (73 aa). 3 N-linked (GlcNAc...) asparagine glycosylation sites follow: asparagine 95, asparagine 108, and asparagine 182. The Zn(2+) site is built by histidine 190, aspartate 209, glutamate 248, and aspartate 275. Cysteine 324 and cysteine 328 form a disulfide bridge. Histidine 357 contributes to the Zn(2+) binding site.

The protein belongs to the peptidase M28 family. M28E subfamily. Monomer. The cofactor is Zn(2+).

The protein resides in the secreted. Functionally, extracellular aminopeptidase that allows assimilation of proteinaceous substrates. This is Leucine aminopeptidase 1 (LAP1) from Grosmannia clavigera (strain kw1407 / UAMH 11150) (Blue stain fungus).